Here is a 513-residue protein sequence, read N- to C-terminus: Light-independent protochlorophyllide reductase subunit B (513 aa).

Residue aspartate 36 coordinates [4Fe-4S] cluster. The Proton donor role is filled by aspartate 299. Position 434-435 (434-435 (GM)) interacts with substrate.

It belongs to the ChlB/BchB/BchZ family. Protochlorophyllide reductase is composed of three subunits; ChlL, ChlN and ChlB. Forms a heterotetramer of two ChlB and two ChlN subunits. [4Fe-4S] cluster serves as cofactor.

It localises to the plastid. The protein localises to the chloroplast. It carries out the reaction chlorophyllide a + oxidized 2[4Fe-4S]-[ferredoxin] + 2 ADP + 2 phosphate = protochlorophyllide a + reduced 2[4Fe-4S]-[ferredoxin] + 2 ATP + 2 H2O. It participates in porphyrin-containing compound metabolism; chlorophyll biosynthesis (light-independent). Its function is as follows. Component of the dark-operative protochlorophyllide reductase (DPOR) that uses Mg-ATP and reduced ferredoxin to reduce ring D of protochlorophyllide (Pchlide) to form chlorophyllide a (Chlide). This reaction is light-independent. The NB-protein (ChlN-ChlB) is the catalytic component of the complex. The chain is Light-independent protochlorophyllide reductase subunit B from Marchantia polymorpha (Common liverwort).